Here is a 67-residue protein sequence, read N- to C-terminus: Large ribosomal subunit protein bL32 (67 aa).

Basic residues predominate over residues 1–19 (MAVPKRKMSRANTRARRAQ). The interval 1–20 (MAVPKRKMSRANTRARRAQW) is disordered.

The protein belongs to the bacterial ribosomal protein bL32 family.

The protein is Large ribosomal subunit protein bL32 of Paenarthrobacter aurescens (strain TC1).